Consider the following 64-residue polypeptide: Large ribosomal subunit protein uL29 (64 aa).

This sequence belongs to the universal ribosomal protein uL29 family.

The polypeptide is Large ribosomal subunit protein uL29 (Verminephrobacter eiseniae (strain EF01-2)).